The sequence spans 194 residues: ATP-dependent Clp protease proteolytic subunit (194 aa).

Serine 98 (nucleophile) is an active-site residue. The active site involves histidine 123.

Belongs to the peptidase S14 family. Fourteen ClpP subunits assemble into 2 heptameric rings which stack back to back to give a disk-like structure with a central cavity, resembling the structure of eukaryotic proteasomes.

Its subcellular location is the cytoplasm. It carries out the reaction Hydrolysis of proteins to small peptides in the presence of ATP and magnesium. alpha-casein is the usual test substrate. In the absence of ATP, only oligopeptides shorter than five residues are hydrolyzed (such as succinyl-Leu-Tyr-|-NHMec, and Leu-Tyr-Leu-|-Tyr-Trp, in which cleavage of the -Tyr-|-Leu- and -Tyr-|-Trp bonds also occurs).. Its function is as follows. Cleaves peptides in various proteins in a process that requires ATP hydrolysis. Has a chymotrypsin-like activity. Plays a major role in the degradation of misfolded proteins. The sequence is that of ATP-dependent Clp protease proteolytic subunit from Syntrophus aciditrophicus (strain SB).